A 647-amino-acid polypeptide reads, in one-letter code: DNA topoisomerase 3 (647 aa).

The region spanning 2 to 135 is the Toprim domain; sequence TRLFIAEKPS…KKETVQRLLI (134 aa). Mg(2+) is bound by residues Glu8, Asp104, and Asp106. Positions 156–608 constitute a Topo IA-type catalytic domain; sequence FIPLSVSALA…TLQGRLEQLI (453 aa). The segment at 195 to 200 is interaction with DNA; sequence SVGRVQ. Catalysis depends on Tyr332, which acts as the O-(5'-phospho-DNA)-tyrosine intermediate.

This sequence belongs to the type IA topoisomerase family. Requires Mg(2+) as cofactor.

The enzyme catalyses ATP-independent breakage of single-stranded DNA, followed by passage and rejoining.. Functionally, releases the supercoiling and torsional tension of DNA, which is introduced during the DNA replication and transcription, by transiently cleaving and rejoining one strand of the DNA duplex. Introduces a single-strand break via transesterification at a target site in duplex DNA. The scissile phosphodiester is attacked by the catalytic tyrosine of the enzyme, resulting in the formation of a DNA-(5'-phosphotyrosyl)-enzyme intermediate and the expulsion of a 3'-OH DNA strand. The free DNA strand then undergoes passage around the unbroken strand, thus removing DNA supercoils. Finally, in the religation step, the DNA 3'-OH attacks the covalent intermediate to expel the active-site tyrosine and restore the DNA phosphodiester backbone. The sequence is that of DNA topoisomerase 3 from Vibrio cholerae serotype O1 (strain ATCC 39315 / El Tor Inaba N16961).